Consider the following 354-residue polypeptide: Probable cinnamyl alcohol dehydrogenase 1 (354 aa).

Zn(2+)-binding residues include Cys-47, His-69, Glu-70, Cys-100, Cys-103, Cys-106, Cys-114, and Cys-163. NADP(+) contacts are provided by residues Thr-167, 188-193 (GLGGLG), 211-216 (STSESK), Thr-251, and 297-299 (SVT).

Belongs to the zinc-containing alcohol dehydrogenase family. Homodimer. The cofactor is Zn(2+).

The catalysed reaction is (E)-cinnamyl alcohol + NADP(+) = (E)-cinnamaldehyde + NADPH + H(+). It carries out the reaction (E)-coniferol + NADP(+) = (E)-coniferaldehyde + NADPH + H(+). It catalyses the reaction (E)-sinapyl alcohol + NADP(+) = (E)-sinapaldehyde + NADPH + H(+). The enzyme catalyses (E)-4-coumaroyl alcohol + NADP(+) = (E)-4-coumaraldehyde + NADPH + H(+). The catalysed reaction is (E)-caffeyl alcohol + NADP(+) = (E)-caffeyl aldehyde + NADPH + H(+). It participates in aromatic compound metabolism; phenylpropanoid biosynthesis. Involved in lignin biosynthesis. Catalyzes the final step specific for the production of lignin monomers. Catalyzes the NADPH-dependent reduction of coniferaldehyde, 5-hydroxyconiferaldehyde, sinapaldehyde, 4-coumaraldehyde and caffeyl aldehyde to their respective alcohols. The polypeptide is Probable cinnamyl alcohol dehydrogenase 1 (Oryza sativa subsp. japonica (Rice)).